Reading from the N-terminus, the 178-residue chain is MSTSESPNTPGQGRRARARARELALLALYQWQMTGQDLGAIEAQHLEIDPEEPPVEAGDDEHYPRYPHDGLDRPYFRALLHGVPARLNDLDQALEPLLDRPLRTLDPLEKALLRLGAWELSERMDTPWRVIINEAVNLAKRFGAEQSHRYINGVLDKLARGLPLRATEIEADRKRRGR.

The protein belongs to the NusB family.

Involved in transcription antitermination. Required for transcription of ribosomal RNA (rRNA) genes. Binds specifically to the boxA antiterminator sequence of the ribosomal RNA (rrn) operons. This is Transcription antitermination protein NusB from Alkalilimnicola ehrlichii (strain ATCC BAA-1101 / DSM 17681 / MLHE-1).